A 268-amino-acid polypeptide reads, in one-letter code: MLPSIAKHAASHQIHPLKKHGQNFIFDGSLCDKIVRASGLEENSNVLEIGPGTGGLTRSILHKNPKLLTVIETDERCIPLLNEIKQYHPNLNIIKQDALKLKLSDLNTNKITIISNLPYHIGTELVIRWLKESSLVASMTLMLQKEVVERICAKPSTKAYGRLSVICSLIATVEKCFDVAPTAFYPPPKVYSAIVKLTPLENIPNSDLISKVELITKMAFAGRRKMIKSSLKNLAPNISELLAKLNISDNCRAENLTPNDYLSLASLI.

Residues Asn-23, Ile-25, Gly-50, Glu-72, Asp-97, and Asn-116 each contribute to the S-adenosyl-L-methionine site.

It belongs to the class I-like SAM-binding methyltransferase superfamily. rRNA adenine N(6)-methyltransferase family. RsmA subfamily.

Its subcellular location is the cytoplasm. It catalyses the reaction adenosine(1518)/adenosine(1519) in 16S rRNA + 4 S-adenosyl-L-methionine = N(6)-dimethyladenosine(1518)/N(6)-dimethyladenosine(1519) in 16S rRNA + 4 S-adenosyl-L-homocysteine + 4 H(+). In terms of biological role, specifically dimethylates two adjacent adenosines (A1518 and A1519) in the loop of a conserved hairpin near the 3'-end of 16S rRNA in the 30S particle. May play a critical role in biogenesis of 30S subunits. This chain is Ribosomal RNA small subunit methyltransferase A, found in Rickettsia bellii (strain RML369-C).